An 89-amino-acid chain; its full sequence is Small ribosomal subunit protein bS20 (89 aa).

It belongs to the bacterial ribosomal protein bS20 family.

Its function is as follows. Binds directly to 16S ribosomal RNA. This is Small ribosomal subunit protein bS20 from Sulfurovum sp. (strain NBC37-1).